A 416-amino-acid polypeptide reads, in one-letter code: MQITILGSGVIGVTTAYYLAKLGHEVTVIDREEGPAPETSFANAGQVSPGYASPWAAPGIPLKAAKWLFQKHAPLILRLTTDPVQYRWLLQMLANCTDSRYKINKTRMVRVAEYSRDCLIELRKDTGIEYDQRSQGTLQLFREQYQLDGIGKDIEVLRQDGVPFEVLDRDGCVNVEPALAHAKDKFVGGLRLPNDETGDCFKFTNALAKIAEGLGVKFRFGVNIKSLLMSGGKISGVETSEGIVTAERYVVALGSYTPALIKALGLNAPIYPVKGYSITAPIVDESRAPVSTVLDESYKIAITRLGDRIRVGGMAEVSGFTDDLPAARRATLDLSVTDLFPGGDLKAATFWSGLRPMTPDSTPIIGGTRYDNLFINAGHGTLGWTMACGSGRLLADLISGNKADIRADDLGIARYN.

Isoleucine 3–tyrosine 17 serves as a coordination point for FAD.

This sequence belongs to the DadA oxidoreductase family. It depends on FAD as a cofactor.

The catalysed reaction is a D-alpha-amino acid + A + H2O = a 2-oxocarboxylate + AH2 + NH4(+). Oxidative deamination of D-amino acids. This Brucella suis biovar 1 (strain 1330) protein is D-amino acid dehydrogenase.